A 277-amino-acid chain; its full sequence is 2-dehydro-3-deoxyphosphooctonate aldolase (277 aa).

The protein belongs to the KdsA family.

It is found in the cytoplasm. The enzyme catalyses D-arabinose 5-phosphate + phosphoenolpyruvate + H2O = 3-deoxy-alpha-D-manno-2-octulosonate-8-phosphate + phosphate. The protein operates within carbohydrate biosynthesis; 3-deoxy-D-manno-octulosonate biosynthesis; 3-deoxy-D-manno-octulosonate from D-ribulose 5-phosphate: step 2/3. It participates in bacterial outer membrane biogenesis; lipopolysaccharide biosynthesis. The chain is 2-dehydro-3-deoxyphosphooctonate aldolase from Alkalilimnicola ehrlichii (strain ATCC BAA-1101 / DSM 17681 / MLHE-1).